The primary structure comprises 90 residues: Probable Fe(2+)-trafficking protein (90 aa).

The protein belongs to the Fe(2+)-trafficking protein family. Monomer.

Functionally, could be a mediator in iron transactions between iron acquisition and iron-requiring processes, such as synthesis and/or repair of Fe-S clusters in biosynthetic enzymes. The protein is Probable Fe(2+)-trafficking protein of Yersinia enterocolitica serotype O:8 / biotype 1B (strain NCTC 13174 / 8081).